A 441-amino-acid polypeptide reads, in one-letter code: Phosphoribosylamine--glycine ligase (441 aa).

In terms of domain architecture, ATP-grasp spans 112 to 319; the sequence is RNFMKKYGIE…FTEIMSAVVK (208 aa). 139-196 contacts ATP; that stretch reads IEKLGDVAVKPSGLTGGKGVKVMGDQLPDLKAAKDYTSELLEKGPVVIEERFIGEEFT. Mg(2+) contacts are provided by glutamine 277, glutamate 289, and asparagine 291. The Mn(2+) site is built by glutamine 277, glutamate 289, and asparagine 291.

It belongs to the GARS family. Mg(2+) is required as a cofactor. Mn(2+) serves as cofactor.

The catalysed reaction is 5-phospho-beta-D-ribosylamine + glycine + ATP = N(1)-(5-phospho-beta-D-ribosyl)glycinamide + ADP + phosphate + H(+). The protein operates within purine metabolism; IMP biosynthesis via de novo pathway; N(1)-(5-phospho-D-ribosyl)glycinamide from 5-phospho-alpha-D-ribose 1-diphosphate: step 2/2. The chain is Phosphoribosylamine--glycine ligase from Methanosarcina acetivorans (strain ATCC 35395 / DSM 2834 / JCM 12185 / C2A).